The sequence spans 1392 residues: MAGFKPTPAQSKAINDRGENILVSASAGSGKTAVLVNRTIELIKEGQSIDRMLLVTFTDAAAKNMRDKIRAALQKIVQDSANPKDLRDRMSNQINRLAAADISTIHAFCLKLIKRYYYLIDLDPQFRLLTDETERLLLQEDVWHEVSEELYRNAEEKVSGKASFSELVLNFSSDRDDQGLDDLILRLYEIANAQPDPEKWLQKLPDNYDLGSGSLLESNFYQQQLKPLVIEKLNQFIQDYRELVTRASDNGLDQAAEVIKSDEELMHQLLSSLGGITVSDVCQMMAQQKFGSFRGRPAADDPRIDVFKDIQKQRNQLKKQWEQMVSTYLGKQEAQEPIAKEELLTELTTFSDQFTDLLSKATESQLDAKTVDSLQKDQQMMQELLDLLQPPTWNTIRDLFANAKFARMGGKPKDDELAEEVYKSLGSARTGIKKQFDQLVDRFFNYREDQFRLISTHAQELLRELSAVTINFRRRYQQTKLNRHVLEFSDLEHYAYAILTPPDDQPNWQTLVKDLQNHYQEIMIDEYQDTNRLQESILMKLTSPERKNLFMVGDVKQSIYRFREADPTLFLGKYQNYRQGSDGEAIVLGENFRSMTNVTSFTNILFEQLMDREVGEIDYDEDAHLKYAATYYEENQDNKVHPTEVLLYDANALDPEKEDVEHEDDKLAGEFRMIGMRIKQMVENQELIFHPEDGQMHPIQYGDIVLLERTKAINNSLMEEFNKLNIPLTVHDVESYFQATEVRVMMSLLKIIDNPQQDIPLVAVLRSPIVGLTNQELAFIRLQNRSVDYYAALQTFMSNYQRKALRHQSLLTSEQVNALYEKADHFLGLLRVFRQTAQQQTLVDLIWQIYDQTGYLDYVGAMPGGHQRQANLHALYQRAHSYEQSSFKGLYQFIRFIEKMQEHDKDLGVAPTQLTANTVNVMTIHGSKGLQFPVVFLIDATHGFNKGAARENAVVDAVAGVGIRYMDDQRVIYDTPQRQAVIEEIQRGERAEDLRVLYVALTRAEQRLVITGSFNEEMRTQSLAGSWQRWQKAYQSKNLLIGPQPRITANSFMDWVGLALARYPEFNAQQLSRGNVTLEESTLADTKVTGLAADPHFTAKTYTALDVSDGLAKIGQNASANVTEKNNTVATDASEQKIEQILRYRYPHLVATKTTAYQSVTDVKRVFEDPDTRDMARWDYDQQQKVKTQGIYLNNNFDVPAFIQQTTHEPVATEIGTATHLVFQKLPLDEGLINVEFVDQEIQKLVGEKLINPVVAARINREGIVAFYQTAVGQKILKHPADYHREVPFSMIMNGHELFKGVNVSDDERILIHGIIDGYLRTDEGIILVDYKNDHLNKDYRDFDLARIKDRYRGQLELYKEALNLMEGIPVVQMGLYLLELGEFVLFTKEGD.

The 592-residue stretch at 4–595 (FKPTPAQSKA…IVLGENFRSM (592 aa)) folds into the UvrD-like helicase ATP-binding domain. 25–32 (ASAGSGKT) lines the ATP pocket. Positions 623–929 (AHLKYAATYY…NVMTIHGSKG (307 aa)) constitute a UvrD-like helicase C-terminal domain.

It belongs to the helicase family. AddA subfamily. As to quaternary structure, heterodimer of AddA and AddB/RexB. Mg(2+) is required as a cofactor.

It catalyses the reaction Couples ATP hydrolysis with the unwinding of duplex DNA by translocating in the 3'-5' direction.. The enzyme catalyses ATP + H2O = ADP + phosphate + H(+). In terms of biological role, the heterodimer acts as both an ATP-dependent DNA helicase and an ATP-dependent, dual-direction single-stranded exonuclease. Recognizes the chi site generating a DNA molecule suitable for the initiation of homologous recombination. The AddA nuclease domain is required for chi fragment generation; this subunit has the helicase and 3' -&gt; 5' nuclease activities. In Limosilactobacillus reuteri subsp. reuteri (strain JCM 1112) (Lactobacillus reuteri), this protein is ATP-dependent helicase/nuclease subunit A.